The sequence spans 132 residues: UPF0146 protein PF0123 (132 aa).

It belongs to the UPF0146 family.

The chain is UPF0146 protein PF0123 from Pyrococcus furiosus (strain ATCC 43587 / DSM 3638 / JCM 8422 / Vc1).